Reading from the N-terminus, the 609-residue chain is Proteasome-associated ATPase (609 aa).

The segment at 1-24 (MGESERSEAFGIPRDSPLSSGDAA) is disordered. A coiled-coil region spans residues 20–96 (SGDAAELEQL…LREEVDRLGQ (77 aa)). Residue 296-301 (GCGKTL) coordinates ATP. The tract at residues 608–609 (YL) is docks into pockets in the proteasome alpha-ring.

Belongs to the AAA ATPase family. In terms of assembly, homohexamer. Assembles into a hexameric ring structure that caps the 20S proteasome core. Strongly interacts with the prokaryotic ubiquitin-like protein Pup through a hydrophobic interface; the interacting region of ARC lies in its N-terminal coiled-coil domain. There is one Pup binding site per ARC hexamer ring. Upon ATP-binding, the C-terminus of ARC interacts with the alpha-rings of the proteasome core, possibly by binding to the intersubunit pockets.

Its pathway is protein degradation; proteasomal Pup-dependent pathway. Functionally, ATPase which is responsible for recognizing, binding, unfolding and translocation of pupylated proteins into the bacterial 20S proteasome core particle. May be essential for opening the gate of the 20S proteasome via an interaction with its C-terminus, thereby allowing substrate entry and access to the site of proteolysis. Thus, the C-termini of the proteasomal ATPase may function like a 'key in a lock' to induce gate opening and therefore regulate proteolysis. This is Proteasome-associated ATPase from Mycobacterium bovis (strain BCG / Pasteur 1173P2).